The primary structure comprises 2311 residues: Protein Ycf2 (2311 aa).

1652–1659 (GSIGTGRS) is an ATP binding site.

Belongs to the Ycf2 family.

Its subcellular location is the plastid. It localises to the chloroplast stroma. Its function is as follows. Probable ATPase of unknown function. Its presence in a non-photosynthetic plant (Epifagus virginiana) and experiments in tobacco indicate that it has an essential function which is probably not related to photosynthesis. This is Protein Ycf2 from Lemna minor (Common duckweed).